Consider the following 974-residue polypeptide: Pentatricopeptide repeat-containing protein At5g61990, mitochondrial (974 aa).

Residues methionine 1–leucine 31 constitute a mitochondrion transit peptide. PPR repeat units follow at residues lysine 96–valine 130, aspartate 150–proline 184, arginine 185–phenylalanine 219, aspartate 220–glutamate 250, asparagine 257–proline 275, leucine 276–leucine 310, aspartate 311–isoleucine 345, lysine 346–proline 380, glutamine 381–isoleucine 415, serine 416–proline 450, asparagine 451–proline 485, aspartate 486–proline 520, asparagine 521–proline 555, asparagine 556–glycine 590, aspartate 591–proline 625, aspartate 626–proline 660, asparagine 661–proline 695, asparagine 696–proline 730, aspartate 731–glycine 761, serine 765–arginine 799, asparagine 804–proline 838, threonine 839–proline 873, aspartate 874–aspartate 908, and serine 914–proline 948.

The protein belongs to the PPR family. P subfamily.

The protein resides in the mitochondrion. The protein is Pentatricopeptide repeat-containing protein At5g61990, mitochondrial of Arabidopsis thaliana (Mouse-ear cress).